A 123-amino-acid polypeptide reads, in one-letter code: uncharacterized protein (123 aa).

Residue Thr-56 is modified to Phosphothreonine. Residues Ser-73, Ser-87, Ser-97, Ser-113, and Ser-119 each carry the phosphoserine modification.

In terms of tissue distribution, highly expressed in the kidney (at protein level).

Its subcellular location is the cytoplasm. This is an uncharacterized protein from Felis catus (Cat).